The sequence spans 102 residues: Protein Tat (102 aa).

Basic and acidic residues predominate over residues 1-10; it reads MEPVDPRLEP. A disordered region spans residues 1-20; the sequence is MEPVDPRLEPWNHPGSQPKT. The interaction with human CREBBP stretch occupies residues 1-24; the sequence is MEPVDPRLEPWNHPGSQPKTACNK. The tract at residues 1–48 is transactivation; it reads MEPVDPRLEPWNHPGSQPKTACNKCYCKKCCYHCMCCFTKKGLGISYG. Residues cysteine 22, cysteine 25, and cysteine 27 each coordinate Zn(2+). Residues 22 to 37 form a cysteine-rich region; it reads CNKCYCKKCCYHCMCC. At lysine 28 the chain carries N6-acetyllysine; by host PCAF. Zn(2+) contacts are provided by cysteine 30, histidine 33, cysteine 34, and cysteine 37. The interval 38 to 48 is core; sequence FTKKGLGISYG. The tract at residues 47–102 is disordered; the sequence is YGRKKRSQRRRPPKSSKDHQDPIPEQPLSRQQPGDQTGQKKQKKALEGKTEADPCD. A compositionally biased stretch (basic residues) spans 48–60; the sequence is GRKKRSQRRRPPK. Residues 49 to 57 carry the Nuclear localization signal, RNA-binding (TAR), and protein transduction motif; sequence RKKRSQRRR. Residues 49 to 87 are interaction with the host capping enzyme RNGTT; the sequence is RKKRSQRRRPPKSSKDHQDPIPEQPLSRQQPGDQTGQKK. An N6-acetyllysine; by host EP300 and GCN5L2 mark is found at lysine 50 and lysine 51. Arginine 52 carries the asymmetric dimethylarginine; by host PRMT6 modification. A compositionally biased stretch (polar residues) spans 74-85; it reads LSRQQPGDQTGQ. Over residues 90-102 the composition is skewed to basic and acidic residues; it reads KALEGKTEADPCD.

It belongs to the lentiviruses Tat family. Interacts with host CCNT1. Associates with the P-TEFb complex composed at least of Tat, P-TEFb (CDK9 and CCNT1), TAR RNA, RNA Pol II. Recruits the HATs CREBBP, TAF1/TFIID, EP300, PCAF and GCN5L2. Interacts with host KAT5/Tip60; this interaction targets the latter to degradation. Interacts with the host deacetylase SIRT1. Interacts with host capping enzyme RNGTT; this interaction stimulates RNGTT. Binds to host KDR, and to the host integrins ITGAV/ITGB3 and ITGA5/ITGB1. Interacts with host KPNB1/importin beta-1 without previous binding to KPNA1/importin alpha-1. Interacts with EIF2AK2. Interacts with host nucleosome assembly protein NAP1L1; this interaction may be required for the transport of Tat within the nucleus, since the two proteins interact at the nuclear rim. Interacts with host C1QBP/SF2P32; this interaction involves lysine-acetylated Tat. Interacts with the host chemokine receptors CCR2, CCR3 and CXCR4. Interacts with host DPP4/CD26; this interaction may trigger an anti-proliferative effect. Interacts with host LDLR. Interacts with the host extracellular matrix metalloproteinase MMP1. Interacts with host PRMT6; this interaction mediates Tat's methylation. Interacts with, and is ubiquitinated by MDM2/Hdm2. Interacts with host PSMC3 and HTATIP2. Interacts with STAB1; this interaction may overcome SATB1-mediated repression of IL2 and IL2RA (interleukin) in T cells by binding to the same domain than HDAC1. Interacts (when acetylated) with human CDK13, thereby increasing HIV-1 mRNA splicing and promoting the production of the doubly spliced HIV-1 protein Nef. Interacts with host TBP; this interaction modulates the activity of transcriptional pre-initiation complex. Interacts with host RELA. Interacts with host PLSCR1; this interaction negatively regulates Tat transactivation activity by altering its subcellular distribution. Post-translationally, asymmetrical arginine methylation by host PRMT6 seems to diminish the transactivation capacity of Tat and affects the interaction with host CCNT1. In terms of processing, acetylation by EP300, CREBBP, GCN5L2/GCN5 and PCAF regulates the transactivation activity of Tat. EP300-mediated acetylation of Lys-50 promotes dissociation of Tat from the TAR RNA through the competitive binding to PCAF's bromodomain. In addition, the non-acetylated Tat's N-terminus can also interact with PCAF. PCAF-mediated acetylation of Lys-28 enhances Tat's binding to CCNT1. Lys-50 is deacetylated by SIRT1. Polyubiquitination by host MDM2 does not target Tat to degradation, but activates its transactivation function and fosters interaction with CCNT1 and TAR RNA. Post-translationally, phosphorylated by EIF2AK2 on serine and threonine residues adjacent to the basic region important for TAR RNA binding and function. Phosphorylation of Tat by EIF2AK2 is dependent on the prior activation of EIF2AK2 by dsRNA.

The protein resides in the host nucleus. The protein localises to the host nucleolus. It localises to the host cytoplasm. Its subcellular location is the secreted. Functionally, transcriptional activator that increases RNA Pol II processivity, thereby increasing the level of full-length viral transcripts. Recognizes a hairpin structure at the 5'-LTR of the nascent viral mRNAs referred to as the transactivation responsive RNA element (TAR) and recruits the cyclin T1-CDK9 complex (P-TEFb complex) that will in turn hyperphosphorylate the RNA polymerase II to allow efficient elongation. The CDK9 component of P-TEFb and other Tat-activated kinases hyperphosphorylate the C-terminus of RNA Pol II that becomes stabilized and much more processive. Other factors such as HTATSF1/Tat-SF1, SUPT5H/SPT5, and HTATIP2 are also important for Tat's function. Besides its effect on RNA Pol II processivity, Tat induces chromatin remodeling of proviral genes by recruiting the histone acetyltransferases (HATs) CREBBP, EP300 and PCAF to the chromatin. This also contributes to the increase in proviral transcription rate, especially when the provirus integrates in transcriptionally silent region of the host genome. To ensure maximal activation of the LTR, Tat mediates nuclear translocation of NF-kappa-B by interacting with host RELA. Through its interaction with host TBP, Tat may also modulate transcription initiation. Tat can reactivate a latently infected cell by penetrating in it and transactivating its LTR promoter. In the cytoplasm, Tat is thought to act as a translational activator of HIV-1 mRNAs. Extracellular circulating Tat can be endocytosed by surrounding uninfected cells via the binding to several surface receptors such as CD26, CXCR4, heparan sulfate proteoglycans (HSPG) or LDLR. Neurons are rarely infected, but they internalize Tat via their LDLR. Through its interaction with nuclear HATs, Tat is potentially able to control the acetylation-dependent cellular gene expression. Modulates the expression of many cellular genes involved in cell survival, proliferation or in coding for cytokines or cytokine receptors. Tat plays a role in T-cell and neurons apoptosis. Tat induced neurotoxicity and apoptosis probably contribute to neuroAIDS. Circulating Tat also acts as a chemokine-like and/or growth factor-like molecule that binds to specific receptors on the surface of the cells, affecting many cellular pathways. In the vascular system, Tat binds to ITGAV/ITGB3 and ITGA5/ITGB1 integrins dimers at the surface of endothelial cells and competes with bFGF for heparin-binding sites, leading to an excess of soluble bFGF. The protein is Protein Tat of Human immunodeficiency virus type 1 group N (isolate YBF106) (HIV-1).